Here is a 314-residue protein sequence, read N- to C-terminus: Mitochondrial 2-oxoglutarate/malate carrier protein (314 aa).

An N-acetylalanine modification is found at A2. S6 carries the phosphoserine modification. Solcar repeat units lie at residues 23 to 108 (VKFL…LFER), 117 to 208 (PGFL…SKQF), and 217 to 306 (DNIL…MNKA). The helical transmembrane segment at 24-42 (KFLFGGLAGMGATVFVQPL) threads the bilayer. The residue at position 57 (K57) is an N6-succinyllysine. A helical membrane pass occupies residues 83–101 (GLSAGLLRQATYTTTRLGI). The residue at position 102 (Y102) is a Phosphotyrosine. 3 helical membrane-spanning segments follow: residues 119–140 (FLLKAVIGMTAGATGAFVGTPA), 183–202 (GCIPTMARAVVVNAAQLASY), and 222–240 (HFCASMISGLVTTAASMPV). K256 carries the post-translational modification N6-acetyllysine. A helical transmembrane segment spans residues 281-300 (GFTPYYARLGPHTVLTFIFL).

The protein belongs to the mitochondrial carrier (TC 2.A.29) family. In terms of assembly, interacts with SMIM26. The N-terminus is blocked. In terms of tissue distribution, heart, liver and brain.

It localises to the mitochondrion inner membrane. The catalysed reaction is (S)-malate(in) + 2-oxoglutarate(out) = (S)-malate(out) + 2-oxoglutarate(in). It catalyses the reaction malonate(in) + 2-oxoglutarate(out) = malonate(out) + 2-oxoglutarate(in). It carries out the reaction succinate(in) + 2-oxoglutarate(out) = succinate(out) + 2-oxoglutarate(in). The enzyme catalyses maleate(in) + 2-oxoglutarate(out) = maleate(out) + 2-oxoglutarate(in). The catalysed reaction is oxaloacetate(in) + 2-oxoglutarate(out) = oxaloacetate(out) + 2-oxoglutarate(in). Catalyzes the transport of 2-oxoglutarate (alpha-oxoglutarate) across the inner mitochondrial membrane in an electroneutral exchange for malate. Can also exchange 2-oxoglutarate for other dicarboxylic acids such as malonate, succinate, maleate and oxaloacetate, although with lower affinity. Contributes to several metabolic processes, including the malate-aspartate shuttle, the oxoglutarate/isocitrate shuttle, in gluconeogenesis from lactate, and in nitrogen metabolism. Maintains mitochondrial fusion and fission events, and the organization and morphology of cristae. Involved in the regulation of apoptosis. Helps protect from cytotoxic-induced apoptosis by modulating glutathione levels in mitochondria. The polypeptide is Mitochondrial 2-oxoglutarate/malate carrier protein (SLC25A11) (Bos taurus (Bovine)).